The sequence spans 100 residues: Small ribosomal subunit protein uS14c (100 aa).

It belongs to the universal ribosomal protein uS14 family. In terms of assembly, part of the 30S ribosomal subunit.

It localises to the plastid. It is found in the chloroplast. Binds 16S rRNA, required for the assembly of 30S particles. The polypeptide is Small ribosomal subunit protein uS14c (Emiliania huxleyi (Coccolithophore)).